The following is a 345-amino-acid chain: Methionine import ATP-binding protein MetN (345 aa).

Positions 2–241 constitute an ABC transporter domain; sequence IKLNNIXKIF…PKTELAQEFI (240 aa). Residue 38 to 45 coordinates ATP; it reads GASGAGKS.

Belongs to the ABC transporter superfamily. Methionine importer (TC 3.A.1.24) family. In terms of assembly, the complex is composed of two ATP-binding proteins (MetN), two transmembrane proteins (MetI) and a solute-binding protein (MetQ).

The protein localises to the cell inner membrane. The catalysed reaction is L-methionine(out) + ATP + H2O = L-methionine(in) + ADP + phosphate + H(+). The enzyme catalyses D-methionine(out) + ATP + H2O = D-methionine(in) + ADP + phosphate + H(+). In terms of biological role, part of the ABC transporter complex MetNIQ involved in methionine import. Responsible for energy coupling to the transport system. This Haemophilus influenzae (strain ATCC 51907 / DSM 11121 / KW20 / Rd) protein is Methionine import ATP-binding protein MetN.